A 198-amino-acid chain; its full sequence is ATP-dependent Clp protease proteolytic subunit (198 aa).

Ser98 acts as the Nucleophile in catalysis. His123 is an active-site residue.

Belongs to the peptidase S14 family. Fourteen ClpP subunits assemble into 2 heptameric rings which stack back to back to give a disk-like structure with a central cavity, resembling the structure of eukaryotic proteasomes.

The protein localises to the cytoplasm. It catalyses the reaction Hydrolysis of proteins to small peptides in the presence of ATP and magnesium. alpha-casein is the usual test substrate. In the absence of ATP, only oligopeptides shorter than five residues are hydrolyzed (such as succinyl-Leu-Tyr-|-NHMec, and Leu-Tyr-Leu-|-Tyr-Trp, in which cleavage of the -Tyr-|-Leu- and -Tyr-|-Trp bonds also occurs).. Functionally, cleaves peptides in various proteins in a process that requires ATP hydrolysis. Has a chymotrypsin-like activity. Plays a major role in the degradation of misfolded proteins. This Ehrlichia ruminantium (strain Gardel) protein is ATP-dependent Clp protease proteolytic subunit.